The sequence spans 41 residues: MYRKSTLAMLIALLTSAASAHAQTDISTIEARLNALEKRLQ.

Residues 1–22 form the signal peptide; the sequence is MYRKSTLAMLIALLTSAASAHA.

This sequence belongs to the porin LamB (TC 1.B.3) family. As to quaternary structure, homotrimer.

The protein resides in the cell outer membrane. Functionally, porin for sucrose uptake. This Salmonella thompson protein is Sucrose porin (scrY).